A 711-amino-acid chain; its full sequence is Ferric/cupric reductase transmembrane component 2 (711 aa).

Residues Met-1–Ala-23 form the signal peptide. Residues Lys-24–Asn-164 lie on the Extracellular side of the membrane. N-linked (GlcNAc...) asparagine glycosylation is found at Asn-85, Asn-108, Asn-120, and Asn-134. Residues Ile-165–His-185 traverse the membrane as a helical segment. Over Cys-186 to Arg-235 the chain is Cytoplasmic. The helical transmembrane segment at Leu-236–Tyr-256 threads the bilayer. The Extracellular portion of the chain corresponds to Glu-257 to Ser-280. One can recognise a Ferric oxidoreductase domain in the interval Ser-280–Ile-414. A helical membrane pass occupies residues Gly-281–Leu-301. Over Glu-302 to Lys-317 the chain is Cytoplasmic. Heme is bound by residues His-316 and His-330. A helical transmembrane segment spans residues Trp-318–Ala-340. An N-linked (GlcNAc...) asparagine glycan is attached at Asn-341. Over Asn-341 to Trp-353 the chain is Extracellular. The helical transmembrane segment at Gln-354–Phe-374 threads the bilayer. At Arg-375–Tyr-377 the chain is on the cytoplasmic side. A helical membrane pass occupies residues Phe-378–Trp-398. Heme contacts are provided by His-386 and His-400. The Extracellular segment spans residues Glu-399–His-400. A helical membrane pass occupies residues Val-401 to Ile-423. In terms of domain architecture, FAD-binding FR-type spans Ala-415–Val-534. Topologically, residues Arg-424–Trp-711 are cytoplasmic. An FAD-binding site is contributed by His-479 to Asp-485. NADP(+) contacts are provided by residues Gly-526 to Gly-529 and Cys-677 to Gly-678.

This sequence belongs to the ferric reductase (FRE) family. Requires FAD as cofactor. It depends on heme as a cofactor.

It is found in the cell membrane. The catalysed reaction is 2 a Fe(II)-siderophore + NADP(+) + H(+) = 2 a Fe(III)-siderophore + NADPH. Its function is as follows. Metalloreductase responsible for reducing extracellular iron and copper prior to import. Catalyzes the reductive uptake of Fe(3+)-salts and Fe(3+) bound to catecholate or hydroxamate siderophores. Fe(3+) is reduced to Fe(2+), which then dissociates from the siderophore and can be imported by the high-affinity Fe(2+) transport complex in the plasma membrane. Also participates in Cu(2+) reduction and Cu(+) uptake. In Saccharomyces cerevisiae (strain ATCC 204508 / S288c) (Baker's yeast), this protein is Ferric/cupric reductase transmembrane component 2 (FRE2).